A 108-amino-acid chain; its full sequence is MEVKTYAFLQIAVFIFLGMQIFASLTDAADDDNELFTVQYCGMNCTKDEGGTWTGCTGKKEGCKCYHESGKNYGLCLSTEYTDFSQYGNPSDSEIEAAKPKRSDTLSH.

A signal peptide spans 1 to 28 (MEVKTYAFLQIAVFIFLGMQIFASLTDA). 3 disulfide bridges follow: Cys-41–Cys-63, Cys-45–Cys-65, and Cys-56–Cys-76. N-linked (GlcNAc...) asparagine glycosylation is present at Asn-44. The disordered stretch occupies residues 89-108 (NPSDSEIEAAKPKRSDTLSH). The span at 96–108 (EAAKPKRSDTLSH) shows a compositional bias: basic and acidic residues.

The protein resides in the secreted. In terms of biological role, salivary chemokine-binding protein which has chemokine-neutralizing activity and binds to host chemokines CXCL1, CXCL2, CXCL3, CXCL5, CXCL6 and CXCL8. This chain is Evasin P1156, found in Ixodes ricinus (Common tick).